The sequence spans 120 residues: Large ribosomal subunit protein uL22 (120 aa).

Belongs to the universal ribosomal protein uL22 family. As to quaternary structure, part of the 50S ribosomal subunit.

Functionally, this protein binds specifically to 23S rRNA; its binding is stimulated by other ribosomal proteins, e.g. L4, L17, and L20. It is important during the early stages of 50S assembly. It makes multiple contacts with different domains of the 23S rRNA in the assembled 50S subunit and ribosome. Its function is as follows. The globular domain of the protein is located near the polypeptide exit tunnel on the outside of the subunit, while an extended beta-hairpin is found that lines the wall of the exit tunnel in the center of the 70S ribosome. The chain is Large ribosomal subunit protein uL22 from Rippkaea orientalis (strain PCC 8801 / RF-1) (Cyanothece sp. (strain PCC 8801)).